The sequence spans 78 residues: NAD(P)H-quinone oxidoreductase subunit O (78 aa).

It belongs to the complex I NdhO subunit family. As to quaternary structure, NDH-1 can be composed of about 15 different subunits; different subcomplexes with different compositions have been identified which probably have different functions.

The protein resides in the cell inner membrane. The enzyme catalyses a plastoquinone + NADH + (n+1) H(+)(in) = a plastoquinol + NAD(+) + n H(+)(out). The catalysed reaction is a plastoquinone + NADPH + (n+1) H(+)(in) = a plastoquinol + NADP(+) + n H(+)(out). Its function is as follows. NDH-1 shuttles electrons from an unknown electron donor, via FMN and iron-sulfur (Fe-S) centers, to quinones in the respiratory and/or the photosynthetic chain. The immediate electron acceptor for the enzyme in this species is believed to be plastoquinone. Couples the redox reaction to proton translocation, and thus conserves the redox energy in a proton gradient. Cyanobacterial NDH-1 also plays a role in inorganic carbon-concentration. In Gloeobacter violaceus (strain ATCC 29082 / PCC 7421), this protein is NAD(P)H-quinone oxidoreductase subunit O.